A 215-amino-acid polypeptide reads, in one-letter code: Pyridoxine/pyridoxamine 5'-phosphate oxidase (215 aa).

Substrate is bound by residues 9 to 12 (RKEY) and lysine 67. FMN-binding positions include 62-67 (RIVLLK), 77-78 (YT), lysine 84, and glutamine 106. Positions 124, 128, and 132 each coordinate substrate. FMN contacts are provided by residues 141–142 (QS) and tryptophan 187. Residue 193–195 (RLH) participates in substrate binding. Arginine 197 is an FMN binding site.

Belongs to the pyridoxamine 5'-phosphate oxidase family. Homodimer. FMN is required as a cofactor.

The enzyme catalyses pyridoxamine 5'-phosphate + O2 + H2O = pyridoxal 5'-phosphate + H2O2 + NH4(+). The catalysed reaction is pyridoxine 5'-phosphate + O2 = pyridoxal 5'-phosphate + H2O2. It participates in cofactor metabolism; pyridoxal 5'-phosphate salvage; pyridoxal 5'-phosphate from pyridoxamine 5'-phosphate: step 1/1. Its pathway is cofactor metabolism; pyridoxal 5'-phosphate salvage; pyridoxal 5'-phosphate from pyridoxine 5'-phosphate: step 1/1. Its function is as follows. Catalyzes the oxidation of either pyridoxine 5'-phosphate (PNP) or pyridoxamine 5'-phosphate (PMP) into pyridoxal 5'-phosphate (PLP). The protein is Pyridoxine/pyridoxamine 5'-phosphate oxidase of Cytophaga hutchinsonii (strain ATCC 33406 / DSM 1761 / CIP 103989 / NBRC 15051 / NCIMB 9469 / D465).